A 105-amino-acid polypeptide reads, in one-letter code: Small ribosomal subunit protein uS10 (105 aa).

It belongs to the universal ribosomal protein uS10 family. In terms of assembly, part of the 30S ribosomal subunit.

In terms of biological role, involved in the binding of tRNA to the ribosomes. The chain is Small ribosomal subunit protein uS10 from Synechocystis sp. (strain ATCC 27184 / PCC 6803 / Kazusa).